Consider the following 326-residue polypeptide: Zona pellucida-binding protein 2 (326 aa).

Residues 1-20 (MLAWALLSAVLWSLAGVGSA) form the signal peptide. 3 N-linked (GlcNAc...) asparagine glycosylation sites follow: asparagine 86, asparagine 220, and asparagine 256.

The protein belongs to the zona pellucida-binding protein Sp38 family. In terms of processing, N-glycosylated.

The protein resides in the secreted. It is found in the cytoplasmic vesicle. Its subcellular location is the secretory vesicle. The protein localises to the acrosome. Its function is as follows. Is implicated in sperm-oocyte interaction during fertilization. The protein is Zona pellucida-binding protein 2 (Zpbp2) of Rattus norvegicus (Rat).